Consider the following 224-residue polypeptide: 2-C-methyl-D-erythritol 4-phosphate cytidylyltransferase (224 aa).

The protein belongs to the IspD/TarI cytidylyltransferase family. IspD subfamily.

The enzyme catalyses 2-C-methyl-D-erythritol 4-phosphate + CTP + H(+) = 4-CDP-2-C-methyl-D-erythritol + diphosphate. It participates in isoprenoid biosynthesis; isopentenyl diphosphate biosynthesis via DXP pathway; isopentenyl diphosphate from 1-deoxy-D-xylulose 5-phosphate: step 2/6. In terms of biological role, catalyzes the formation of 4-diphosphocytidyl-2-C-methyl-D-erythritol from CTP and 2-C-methyl-D-erythritol 4-phosphate (MEP). The chain is 2-C-methyl-D-erythritol 4-phosphate cytidylyltransferase from Bordetella petrii (strain ATCC BAA-461 / DSM 12804 / CCUG 43448).